Here is a 397-residue protein sequence, read N- to C-terminus: Linalool dehydratase/isomerase (397 aa).

An N-terminal signal peptide occupies residues 1 to 26 (MRFTLKTTAIVSAAALLAGFGPPPRA). Catalysis depends on Asp64, which acts as the Proton donor/acceptor. Cystine bridges form between Cys74/Cys127 and Cys196/Cys205. Cys196 contributes to the (2E)-geraniol binding site.

As to quaternary structure, homotetramer. Homopentamer.

It localises to the periplasm. It carries out the reaction (S)-linalool = beta-myrcene + H2O. It catalyses the reaction (2E)-geraniol = (S)-linalool. It functions in the pathway terpene metabolism; monoterpene degradation. With respect to regulation, is inhibited by molecular oxygen, high salt concentrations (NaCl, KCl, or MgCl(2)), urea, and Ti(III)citrate. Activity is not affected by EDTA. Its function is as follows. Anaerobically catalyzes the stereospecific hydration of beta-myrcene to (3S)-linalool and the isomerization of (3S)-linalool to geraniol. Is thus involved in the initial steps of the anaerobic degradation of the monoterpene beta-myrcene. Also catalyzes the reverse reactions, i.e. the isomerization of geraniol to linalool and the dehydration of linalool to myrcene. In this direction, the formation of myrcene from geraniol may be seen as a detoxification process for the monoterpene alcohol. Shows a relatively broad substrate specificity and can use various geraniol and linalool derivatives. Substrates required a specific alpha-methylallyl alcohol signature motif. Neither the monoterpenes alpha- and beta-ocimene nor the monoterpenoids citronellol and nerol can be used as substrates. The polypeptide is Linalool dehydratase/isomerase (Castellaniella defragrans (strain DSM 12143 / CCUG 39792 / 65Phen) (Alcaligenes defragrans)).